Reading from the N-terminus, the 102-residue chain is Glycoprotein 24A (102 aa).

This sequence belongs to the csb family. Post-translationally, O-glycosylated.

It localises to the cell surface. Cell-cell adhesion during early development. The sequence is that of Glycoprotein 24A (csbA) from Dictyostelium discoideum (Social amoeba).